We begin with the raw amino-acid sequence, 167 residues long: Ribosome maturation factor RimM (167 aa).

Residues 94–165 enclose the PRC barrel domain; that stretch reads ENEFYYSDII…KIIITPMEGL (72 aa).

Belongs to the RimM family. As to quaternary structure, binds ribosomal protein uS19.

It is found in the cytoplasm. Its function is as follows. An accessory protein needed during the final step in the assembly of 30S ribosomal subunit, possibly for assembly of the head region. Essential for efficient processing of 16S rRNA. May be needed both before and after RbfA during the maturation of 16S rRNA. It has affinity for free ribosomal 30S subunits but not for 70S ribosomes. In Staphylococcus aureus (strain NCTC 8325 / PS 47), this protein is Ribosome maturation factor RimM.